Here is a 461-residue protein sequence, read N- to C-terminus: Adenosylmethionine-8-amino-7-oxononanoate aminotransferase (461 aa).

Residue G117–A118 participates in pyridoxal 5'-phosphate binding. Y150 provides a ligand contact to substrate. Residue D263 participates in pyridoxal 5'-phosphate binding. Positions 296, 331, and 426 each coordinate substrate. K296 carries the post-translational modification N6-(pyridoxal phosphate)lysine.

It belongs to the class-III pyridoxal-phosphate-dependent aminotransferase family. BioA subfamily. As to quaternary structure, homodimer. Requires pyridoxal 5'-phosphate as cofactor.

It localises to the cytoplasm. It carries out the reaction (8S)-8-amino-7-oxononanoate + S-adenosyl-L-methionine = S-adenosyl-4-methylsulfanyl-2-oxobutanoate + (7R,8S)-7,8-diammoniononanoate. It functions in the pathway cofactor biosynthesis; biotin biosynthesis; 7,8-diaminononanoate from 8-amino-7-oxononanoate (SAM route): step 1/1. Catalyzes the transfer of the alpha-amino group from S-adenosyl-L-methionine (SAM) to 7-keto-8-aminopelargonic acid (KAPA) to form 7,8-diaminopelargonic acid (DAPA). It is the only aminotransferase known to utilize SAM as an amino donor. This Methanocaldococcus jannaschii (strain ATCC 43067 / DSM 2661 / JAL-1 / JCM 10045 / NBRC 100440) (Methanococcus jannaschii) protein is Adenosylmethionine-8-amino-7-oxononanoate aminotransferase.